Reading from the N-terminus, the 240-residue chain is Transposase for insertion sequence element IS3411 (240 aa).

The Integrase catalytic domain occupies 125-240 (VAERPDQLWV…RASMVFTKRR (116 aa)).

In terms of biological role, involved in the transposition of the insertion sequence. The sequence is that of Transposase for insertion sequence element IS3411 from Escherichia coli.